Here is a 158-residue protein sequence, read N- to C-terminus: Siroheme decarboxylase beta subunit (158 aa).

The protein belongs to the Ahb/Nir family. Forms a heterodimer composed of AhbA and AhbB.

It catalyses the reaction siroheme + 2 H(+) = 12,18-didecarboxysiroheme + 2 CO2. It participates in porphyrin-containing compound metabolism; protoheme biosynthesis. Its function is as follows. Involved in siroheme-dependent heme b biosynthesis. Catalyzes the decarboxylation of siroheme into didecarboxysiroheme. The protein is Siroheme decarboxylase beta subunit of Oleidesulfovibrio alaskensis (strain ATCC BAA-1058 / DSM 17464 / G20) (Desulfovibrio alaskensis).